An 852-amino-acid polypeptide reads, in one-letter code: Lon protease homolog 2, peroxisomal (852 aa).

N-acetylserine is present on serine 2. The Lon N-terminal domain maps to 13–222 (LPLLLTHESV…MTIPLLVRQI (210 aa)). ATP is bound at residue 375-382 (GPPGVGKT). In terms of domain architecture, Lon proteolytic spans 651 to 837 (LSQPGVAIGL…DEVLNAAFDG (187 aa)). Catalysis depends on residues serine 743 and lysine 786. Residues 850–852 (SKL) carry the Microbody targeting signal motif.

The protein belongs to the peptidase S16 family. Interacts with PEX5. Interacts with TYSND1. May interact with enzymes involved in beta-oxidation of fatty acids, including ACOX1/AOX.

It localises to the peroxisome matrix. The catalysed reaction is Hydrolysis of proteins in presence of ATP.. Its function is as follows. ATP-dependent serine protease that mediates the selective degradation of misfolded and unassembled polypeptides in the peroxisomal matrix. Necessary for type 2 peroxisome targeting signal (PTS2)-containing protein processing and facilitates peroxisome matrix protein import. May indirectly regulate peroxisomal fatty acid beta-oxidation through degradation of the self-processed forms of TYSND1. In Mus musculus (Mouse), this protein is Lon protease homolog 2, peroxisomal (Lonp2).